Consider the following 1190-residue polypeptide: MPAPEQGSLVEEGQPQTHQEAVSTGPGMEPETTATTILASVKEQELQFQRLTRELEVERQIVASQLERCRLGAESPSIASTSSTEKSFPWRSTDVPNPGVSKPRVSDTIHPNNYLIRTEPEQGTLYSPEQTSLHESEGSLGNSRSSTQMNSYSDSGYQEAGSFHNSQTVNKADSRQHPFTGSTSNHVVRTSRAEGQTLVQPSVANRAMRRVSSVPSRAQSPSYVTSTGVSPSRGSLRTSLGSGFGSPSVTDSRPLNPSAYSSSTLPAQRAASPYSQRPASPTAVRRVGSVTSRQTSNPNGPVPQYQTTTRVGSPLTLTDAQTRVASPSQGQVGSSSPKRSGMTAVPQHLGPSLQRTVHDMDQFGQQQYDIYERMVPPRPDSLTGLRSSYASQHSQLGQELRSAVSPDLHITPIYEGRTYYSPVYRSPNHGTVELQGSQTALYRTGSVGIGNLQRTSSQRSTLTYQRNNYALNTAATYAEPYRPVQYRVQECSYNRLQHTGPADDGATRSPSIDSIQKDPREFAWRDPELPEVIHMLQHQFPSVQANAAAYLQHLCFGDNKVKMEVYRLGGIKHLVDLLDHRVLEVQKNACGALRNLVFGKSTDENKIAMKNVGGIPALLRLLRKSIDAEVRELVTGVLWNLSSCDAVKMTIIRDALSTLTNTVIVPHSGWNNSSFDDDHKIKFQTSLVLRNTTGCLRNLSSAGEEARKQMRSCEGLVDSLLYVIHTCVNTSDYDSKTVENCVCTLRNLSYRLELEVPQARLLGLNELDDLLGKESPSKDSEPSCWGKKKKKKKRTPQEDQWDGVGPIPGLSKSPKGVEMLWHPSVVKPYLTLLAESSNPATLEGSAGSLQNLSAGNWKFAAYIRAAVRKEKGLPILVELLRMDNDRVVSSVATALRNMALDVRNKELIGKYAMRDLVNRLPGGNGPSILSDETVAAICCALHEVTSKNMENAKALADSGGIEKLVNITKGRGDRSSLKVVKAAAQVLNTLWQYRDLRSIYKKDGWNQNHFITPVSTLERDRFKSHPSLSTTNQQMSPIIQSVGSTSSSPALLGIREPRSEYDRTQPPMQYYNSQGDTTHKGLYPGSSKPSPIYISSYSSPAREQNRRLQHQQLYYQDDSTRKTLDAYRLYLQSPRSYEDPYCDDRVHFPASTDYSTQYGLKSTTNYVDFYSTKRPSYRAEQYPGSPDSWV.

Residues 1-32 (MPAPEQGSLVEEGQPQTHQEAVSTGPGMEPET) are disordered. Residues 36–63 (TILASVKEQELQFQRLTRELEVERQIVA) adopt a coiled-coil conformation. Residues 73–347 (AESPSIASTS…KRSGMTAVPQ (275 aa)) form a disordered region. Ser-75 is subject to Phosphoserine. Positions 77–86 (SIASTSSTEK) are enriched in polar residues. Thr-84 is modified (phosphothreonine). 4 positions are modified to phosphoserine: Ser-106, Ser-132, Ser-136, and Ser-139. 3 stretches are compositionally biased toward polar residues: residues 138–156 (GSLG…SDSG), 163–203 (FHNS…QPSV), and 213–229 (SVPS…STGV). Ser-220, Ser-230, and Ser-235 each carry phosphoserine. Residues 230 to 241 (SPSRGSLRTSLG) show a composition bias toward low complexity. Polar residues predominate over residues 247-266 (PSVTDSRPLNPSAYSSSTLP). Omega-N-methylarginine occurs at positions 253 and 269. A phosphoserine mark is found at Ser-272, Ser-280, Ser-313, Ser-326, and Ser-336. Polar residues predominate over residues 289 to 323 (SVTSRQTSNPNGPVPQYQTTTRVGSPLTLTDAQTR). Over residues 324-337 (VASPSQGQVGSSSP) the composition is skewed to low complexity. The residue at position 371 (Tyr-371) is a Phosphotyrosine. Phosphoserine is present on residues Ser-391, Ser-402, and Ser-405. Phosphothreonine is present on Thr-411. The residue at position 414 (Tyr-414) is a Phosphotyrosine. 3 positions are modified to phosphoserine: Ser-421, Ser-426, and Ser-437. At Tyr-477 the chain carries Phosphotyrosine. 3 positions are modified to phosphoserine: Ser-509, Ser-511, and Ser-514. ARM repeat units lie at residues 517–556 (KDPR…HLCF), 559–598 (NKVK…NLVF), and 603–643 (DENK…NLSS). Basic and acidic residues predominate over residues 772–781 (GKESPSKDSE). A disordered region spans residues 772-809 (GKESPSKDSEPSCWGKKKKKKKRTPQEDQWDGVGPIPG). A Phosphoserine modification is found at Ser-775. An ARM 4 repeat occupies 861–900 (AYIRAAVRKEKGLPILVELLRMDNDRVVSSVATALRNMAL). Residues Thr-1012 and Thr-1016 each carry the phosphothreonine modification. A phosphoserine mark is found at Ser-1044, Ser-1090, Ser-1099, and Ser-1133.

The protein belongs to the beta-catenin family. Interacts (via the C-terminus) with FRMPD2 (via the PDZ 2 domain). Interacts with PDZD2. Interacts with RHOA; the interaction is detected at the midbody. Interacts with ECT2; the interaction is detected at the midbody. Interacts with CCDC85B.

It localises to the cell junction. Its subcellular location is the desmosome. It is found in the cytoplasm. The protein localises to the cytoskeleton. The protein resides in the spindle. It localises to the spindle pole. Its subcellular location is the midbody. It is found in the cell membrane. In terms of biological role, plays a role as a regulator of Rho activity during cytokinesis. May play a role in junctional plaques. The protein is Plakophilin-4 (Pkp4) of Mus musculus (Mouse).